Here is a 256-residue protein sequence, read N- to C-terminus: Spheroidene monooxygenase (256 aa).

Residues 1–23 (MTNELSNAAGASQQGPAASSFSA) show a composition bias toward low complexity. Positions 1-26 (MTNELSNAAGASQQGPAASSFSADTP) are disordered.

It belongs to the CrtA family. Heme serves as cofactor.

It carries out the reaction spheroidene + 4 reduced [2Fe-2S]-[ferredoxin] + 2 O2 + 4 H(+) = spheroiden-2-one + 4 oxidized [2Fe-2S]-[ferredoxin] + 3 H2O. The catalysed reaction is spirilloxanthin + 4 reduced [2Fe-2S]-[ferredoxin] + 2 O2 + 4 H(+) = 2-oxospirilloxanthin + 4 oxidized [2Fe-2S]-[ferredoxin] + 3 H2O. It catalyses the reaction 2-oxospirilloxanthin + 4 reduced [2Fe-2S]-[ferredoxin] + 2 O2 + 4 H(+) = 2,2'-dioxospirilloxanthin + 4 oxidized [2Fe-2S]-[ferredoxin] + 3 H2O. The enzyme catalyses spheroidene + 2 reduced [2Fe-2S]-[ferredoxin] + O2 + 2 H(+) = 2-hydroxyspheroidene + 2 oxidized [2Fe-2S]-[ferredoxin] + H2O. It carries out the reaction 2-hydroxyspheroidene + 2 reduced [2Fe-2S]-[ferredoxin] + O2 + 2 H(+) = 2,2-dihydroxyspheroidene + 2 oxidized [2Fe-2S]-[ferredoxin] + H2O. The catalysed reaction is 2,2-dihydroxyspheroidene = spheroiden-2-one + H2O. It catalyses the reaction spirilloxanthin + 2 reduced [2Fe-2S]-[ferredoxin] + O2 + 2 H(+) = 2-hydroxyspirilloxanthin + 2 oxidized [2Fe-2S]-[ferredoxin] + H2O. The enzyme catalyses 2-hydroxyspirilloxanthin + 2 reduced [2Fe-2S]-[ferredoxin] + O2 + 2 H(+) = 2,2-dihydroxyspirilloxanthin + 2 oxidized [2Fe-2S]-[ferredoxin] + H2O. It carries out the reaction 2,2-dihydroxyspirilloxanthin = 2-oxospirilloxanthin + H2O. The catalysed reaction is 2-oxospirilloxanthin + 2 reduced [2Fe-2S]-[ferredoxin] + O2 + 2 H(+) = 2'-hydroxy-2-oxospirilloxanthin + 2 oxidized [2Fe-2S]-[ferredoxin] + H2O. It catalyses the reaction 2'-hydroxy-2-oxospirilloxanthin + 2 reduced [2Fe-2S]-[ferredoxin] + O2 + 2 H(+) = 2',2'-dihydroxy-2-oxospirilloxanthin + 2 oxidized [2Fe-2S]-[ferredoxin] + H2O. The enzyme catalyses 2',2'-dihydroxy-2-oxospirilloxanthin = 2,2'-dioxospirilloxanthin + H2O. The protein operates within carotenoid biosynthesis; spheroidene biosynthesis. It participates in carotenoid biosynthesis; spirilloxanthin biosynthesis. Involved in the biosynthesis of the carotenoids spheroidene and spirilloxanthin. Catalyzes the introduction of one keto group at the C-2 position of spheroidene and two keto groups at the C-2 and C-2' positions of spirilloxanthin. The sequence is that of Spheroidene monooxygenase from Rubrivivax gelatinosus (Rhodocyclus gelatinosus).